A 423-amino-acid polypeptide reads, in one-letter code: GTPase Obg (423 aa).

The 158-residue stretch at 1-158 folds into the Obg domain; that stretch reads MFIDTARIYI…MWVRLELKLL (158 aa). The OBG-type G domain occupies 159-329; sequence ADVGLIGFPN…LLDKTIEILS (171 aa). GTP is bound by residues 165 to 172, 190 to 194, 211 to 214, 281 to 284, and 310 to 312; these read GFPNAGKS, FTTLT, DIPG, NKID, and SAL. Mg(2+) is bound by residues S172 and T192. The region spanning 346-423 is the OCT domain; it reads TPPEEEETLN…VRDFEFEYYE (78 aa).

It belongs to the TRAFAC class OBG-HflX-like GTPase superfamily. OBG GTPase family. In terms of assembly, monomer. Mg(2+) is required as a cofactor.

The protein localises to the cytoplasm. An essential GTPase which binds GTP, GDP and possibly (p)ppGpp with moderate affinity, with high nucleotide exchange rates and a fairly low GTP hydrolysis rate. Plays a role in control of the cell cycle, stress response, ribosome biogenesis and in those bacteria that undergo differentiation, in morphogenesis control. The protein is GTPase Obg of Thermoanaerobacter pseudethanolicus (strain ATCC 33223 / 39E) (Clostridium thermohydrosulfuricum).